We begin with the raw amino-acid sequence, 455 residues long: Adenylyltransferase and sulfurtransferase UBA4 (455 aa).

ATP is bound by residues Gly-93, Asp-114, 121–125, Lys-138, and 182–183; these read SNLHR and DH. Residues Cys-224 and Cys-227 each contribute to the Zn(2+) site. Residue Cys-241 is the Glycyl thioester intermediate; for adenylyltransferase activity of the active site. Zn(2+) contacts are provided by Cys-302 and Cys-305. A Rhodanese domain is found at 355-453; sequence QSREHTLIDV…WSEDIDAAFP (99 aa). Cys-413 serves as the catalytic Cysteine persulfide intermediate; for sulfurtransferase activity.

In the N-terminal section; belongs to the HesA/MoeB/ThiF family. UBA4 subfamily. It depends on Zn(2+) as a cofactor.

The protein resides in the cytoplasm. It is found in the cytosol. It functions in the pathway tRNA modification; 5-methoxycarbonylmethyl-2-thiouridine-tRNA biosynthesis. Its function is as follows. Plays a central role in 2-thiolation of mcm(5)S(2)U at tRNA wobble positions of cytosolic tRNA(Lys), tRNA(Glu) and tRNA(Gln). Acts by mediating the C-terminal thiocarboxylation of sulfur carrier URM1. Its N-terminus first activates URM1 as acyl-adenylate (-COAMP), then the persulfide sulfur on the catalytic cysteine is transferred to URM1 to form thiocarboxylation (-COSH) of its C-terminus. The reaction probably involves hydrogen sulfide that is generated from the persulfide intermediate and that acts as a nucleophile towards URM1. Subsequently, a transient disulfide bond is formed. Does not use thiosulfate as sulfur donor; NFS1 probably acting as a sulfur donor for thiocarboxylation reactions. Prior mcm(5) tRNA modification by the elongator complex is required for 2-thiolation. May also be involved in protein urmylation. The sequence is that of Adenylyltransferase and sulfurtransferase UBA4 from Lodderomyces elongisporus (strain ATCC 11503 / CBS 2605 / JCM 1781 / NBRC 1676 / NRRL YB-4239) (Yeast).